A 582-amino-acid polypeptide reads, in one-letter code: MAAFLHHCPFLKSMPKPALRRRVPALLSLADRCPVIVHQVCISRLHILETKLDVSPTQPKRQRLSLLDQKRLFAQTATQVAVSVSKGCPFVSSQIGMVRASPEVQEDVQADLKSPVLPTPPQTGITQLLKDNMVGPSFDYDNFFNEKIAEKKRDHTYRVFKTVNRNAVVFPFAEDYSVSDRQGSQVSVWCSNDYLGMSRHPRVLEAIREVLERHGAGAGGTRNISGTSKYHVTLEKELAHLHQKDAALVFSSCFVANDSTLFTLAKMLPGCHIYSDAGNHASMIQGIRNSGAKRFIFRHNDSRHLEELLQQSDPKTPKIVAFETVHSMDGAICPLEELCDVAHRHGALTFVDEVHAVGLYGAHGAGVGERDNVMHKIDIVSGTLGKAFGCVGGYVASSAALVDTVRSFAAGFIFTTSLPPMILAGALESVRVLKSPEGQLLRRAHQRNVKYMRQLLMDKGLPVVNCPSHIIPIRVGNAELNTKVCDSLLEKHNIYVQAINYPTVPRGQELLRLAPSPHHHPAMMEYFVDKLVEVWQEAGLLLNGPATVSCTFCDRPLHFDLMSEWEKSYFGNMEPQYITMSA.

Residue R158 participates in succinyl-CoA binding. Pyridoxal 5'-phosphate-binding residues include C253 and F254. The succinyl-CoA site is built by S275 and R294. Positions 327, 355, and 383 each coordinate pyridoxal 5'-phosphate. K386 is an active-site residue. K386 is subject to N6-(pyridoxal phosphate)lysine. Pyridoxal 5'-phosphate is bound by residues T415 and T416. Residue T503 participates in succinyl-CoA binding.

This sequence belongs to the class-II pyridoxal-phosphate-dependent aminotransferase family. As to quaternary structure, homodimer. The cofactor is pyridoxal 5'-phosphate.

It is found in the mitochondrion inner membrane. The catalysed reaction is succinyl-CoA + glycine + H(+) = 5-aminolevulinate + CO2 + CoA. The protein operates within porphyrin-containing compound metabolism; protoporphyrin-IX biosynthesis; 5-aminolevulinate from glycine: step 1/1. Functionally, catalyzes the pyridoxal 5'-phosphate (PLP)-dependent condensation of succinyl-CoA and glycine to form aminolevulinic acid (ALA), with CoA and CO2 as by-products. Contributes significantly to heme formation during erythropoiesis. This Opsanus tau (Oyster toadfish) protein is 5-aminolevulinate synthase, erythroid-specific, mitochondrial (alas2).